The primary structure comprises 1205 residues: Nitric oxide synthase 3 (1205 aa).

Residues 1–73 (MGNLKSVGQE…PPEGPKFPRV (73 aa)) form a disordered region. G2 carries N-myristoyl glycine lipidation. 2 S-palmitoyl cysteine lipidation sites follow: C15 and C26. The span at 15 to 27 (CGLGLGLGLGLCG) shows a compositional bias: gly residues. A compositionally biased stretch (pro residues) spans 33–47 (SPAPEPSRAPAPATP). Residues C96 and C101 each contribute to the Zn(2+) site. The interval 100-488 (CCLGSLVLPR…PDPWKGSATK (389 aa)) is interaction with NOSIP. S104 is a binding site for (6R)-L-erythro-5,6,7,8-tetrahydrobiopterin. S116 is modified (phosphoserine; by CDK5). C186 is a heme b binding site. L-arginine-binding residues include Q249, W358, Y359, E363, and N368. The (6R)-L-erythro-5,6,7,8-tetrahydrobiopterin site is built by A448, W449, and F462. Heme b is bound at residue Y477. Residues 492–512 (ITRKKTFKEVANAVKISASLM) are calmodulin-binding. T497 bears the Phosphothreonine; by AMPK and PKA mark. A Flavodoxin-like domain is found at 522–705 (ATILYASETG…AFRGWAKAAF (184 aa)). FMN-binding residues include S528, E529, T530, R532, S574, and T575. Phosphoserine is present on residues S617, S635, and S640. FMN contacts are provided by S656, C663, E689, and Q693. The region spanning 758–1004 (RKMFQATVLS…IRGAPSFRLP (247 aa)) is the FAD-binding FR-type domain. R778 serves as a coordination point for NADP(+). Position 800 (H800) interacts with FAD. The segment at 820–847 (EDPPPPTESVAVEQLEKGSPGGPPPSWV) is disordered. S838 bears the Phosphoserine mark. Positions 940, 942, 943, 958, 960, 964, 977, 978, and 979 each coordinate FAD. Residues T1018, R1051, S1080, R1081, K1087, Y1089, and Q1091 each contribute to the NADP(+) site. T1177 is subject to Phosphothreonine. S1179 carries the phosphoserine; by AMPK, PDPK1 and PKA modification. The residue at position 1181 (S1181) is a Phosphoserine.

This sequence belongs to the NOS family. As to quaternary structure, homodimer. Interacts with NOSIP and NOSTRIN. Interacts with HSP90AB1. Forms a complex with ASL, ASS1 and SLC7A1; the complex regulates cell-autonomous L-arginine synthesis and citrulline recycling while channeling extracellular L-arginine to nitric oxide synthesis pathway. It depends on heme b as a cofactor. FAD is required as a cofactor. Requires FMN as cofactor. (6R)-L-erythro-5,6,7,8-tetrahydrobiopterin serves as cofactor. In terms of processing, phosphorylation by AMPK at Ser-1179 in the presence of Ca(2+)-calmodulin (CaM) activates activity. In absence of Ca(2+)-calmodulin, AMPK also phosphorylates Thr-497, resulting in inhibition of activity. Phosphorylation of Ser-116 by CDK5 reduces activity.

The protein localises to the cell membrane. It localises to the membrane. Its subcellular location is the caveola. It is found in the cytoplasm. The protein resides in the cytoskeleton. The protein localises to the golgi apparatus. It catalyses the reaction 2 L-arginine + 3 NADPH + 4 O2 + H(+) = 2 L-citrulline + 2 nitric oxide + 3 NADP(+) + 4 H2O. With respect to regulation, stimulated by calcium/calmodulin. Inhibited by NOSIP and NOSTRIN. Functionally, produces nitric oxide (NO) which is implicated in vascular smooth muscle relaxation through a cGMP-mediated signal transduction pathway. NO mediates vascular endothelial growth factor (VEGF)-induced angiogenesis in coronary vessels and promotes blood clotting through the activation of platelets. This Bos taurus (Bovine) protein is Nitric oxide synthase 3 (NOS3).